The chain runs to 427 residues: Peptidase B (427 aa).

The Mn(2+) site is built by Lys195 and Asp200. The active site involves Lys207. Positions 218, 277, and 279 each coordinate Mn(2+). The active site involves Arg281.

It belongs to the peptidase M17 family. As to quaternary structure, homohexamer. The cofactor is Mn(2+).

The protein resides in the cytoplasm. The enzyme catalyses Release of an N-terminal amino acid, Xaa, from a peptide or arylamide. Xaa is preferably Glu or Asp but may be other amino acids, including Leu, Met, His, Cys and Gln.. In terms of biological role, probably plays an important role in intracellular peptide degradation. The chain is Peptidase B from Escherichia fergusonii (strain ATCC 35469 / DSM 13698 / CCUG 18766 / IAM 14443 / JCM 21226 / LMG 7866 / NBRC 102419 / NCTC 12128 / CDC 0568-73).